The following is a 197-amino-acid chain: Probable chemoreceptor glutamine deamidase CheD 2 (197 aa).

The protein belongs to the CheD family.

The catalysed reaction is L-glutaminyl-[protein] + H2O = L-glutamyl-[protein] + NH4(+). Its function is as follows. Probably deamidates glutamine residues to glutamate on methyl-accepting chemotaxis receptors (MCPs), playing an important role in chemotaxis. This is Probable chemoreceptor glutamine deamidase CheD 2 from Dechloromonas aromatica (strain RCB).